Here is a 426-residue protein sequence, read N- to C-terminus: MKHLTEMVRQHKAGKTNGIYAVCSAHPLVLEAAIRYASANQTPLLIEATSNQVDQFGGYTGMTPADFRGFVCQLADSLNFPQDALILGGDHLGPNRWQNLPAAQAMANADDLIKSYVAAGFKKIHLDCSMSCQDDPIPLTDDIVAERAARLAKVAEETCLEHFGEADLEYVIGTEVPVPGGAHETLSELAVTTPDAARATLEAHRHAFEKQGLNAIWPRIIALVVQPGVEFDHTNVIDYQPAKATALSQMVESYETLIFEAHSTDYQTPQSLRQLVIDHFAILKVGPALTFALREALFSLAAIEEELVPAKACSGLRQVLENVMLNRPEYWQSHYHGDGNARRLARGYSYSDRVRYYWPDSQIDDAFAHLVRNLADSPIPLPLISQYLPLQYVKVRSGELQPTPRELIINHIQDILAQYHTACEGQ.

This sequence belongs to the GatZ/KbaZ family. KbaZ subfamily. In terms of assembly, forms a complex with KbaY.

Its pathway is carbohydrate metabolism; D-tagatose 6-phosphate degradation; D-glyceraldehyde 3-phosphate and glycerone phosphate from D-tagatose 6-phosphate: step 2/2. Its function is as follows. Component of the tagatose-1,6-bisphosphate aldolase KbaYZ that is required for full activity and stability of the Y subunit. Could have a chaperone-like function for the proper and stable folding of KbaY. When expressed alone, KbaZ does not show any aldolase activity. The protein is D-tagatose-1,6-bisphosphate aldolase subunit KbaZ of Escherichia coli O157:H7.